The primary structure comprises 592 residues: BRCA1-associated protein (592 aa).

Serine 52 carries the post-translational modification Phosphoserine. The disordered stretch occupies residues 78–124 (KSNPDELKTTVEERKSSEASPTAQRSKDHSKECINAAPDSPSKQLPD). A compositionally biased stretch (basic and acidic residues) spans 80-94 (NPDELKTTVEERKSS). Phosphoserine is present on residues serine 97, serine 117, and serine 119. Residues 264–304 (CTVCLERMDESVNGILTTLCNHSFHSQCLQRWDDTTCPVCR) form an RING-type zinc finger. The segment at 301-393 (PVCRYCQTPE…GKIVQYECEG (93 aa)) adopts a UBP-type; degenerate zinc-finger fold. The Zn(2+) site is built by cysteine 317, cysteine 320, cysteine 329, cysteine 332, cysteine 337, histidine 344, histidine 348, and histidine 354. Residues 429–537 (RIEKDTAEEI…EIQEQLRDVM (109 aa)) are a coiled coil. The tract at residues 565-592 (AMASASSPASSGGSGKLPSRKGRSKRGK) is disordered. Residues 582 to 592 (PSRKGRSKRGK) are compositionally biased toward basic residues.

Interacts with the nuclear localization signal of BRCA1 and with the N-terminal of KSR1. The C-terminal portion of BCRA1 interacts with DDB1. As to expression, expressed in breast epithelial cell lines.

It is found in the cytoplasm. It carries out the reaction S-ubiquitinyl-[E2 ubiquitin-conjugating enzyme]-L-cysteine + [acceptor protein]-L-lysine = [E2 ubiquitin-conjugating enzyme]-L-cysteine + N(6)-ubiquitinyl-[acceptor protein]-L-lysine.. It functions in the pathway protein modification; protein ubiquitination. Negatively regulates MAP kinase activation by limiting the formation of Raf/MEK complexes probably by inactivation of the KSR1 scaffold protein. Also acts as a Ras responsive E3 ubiquitin ligase that, on activation of Ras, is modified by auto-polyubiquitination resulting in the release of inhibition of Raf/MEK complex formation. May also act as a cytoplasmic retention protein with a role in regulating nuclear transport. The polypeptide is BRCA1-associated protein (Homo sapiens (Human)).